Here is a 318-residue protein sequence, read N- to C-terminus: Tyrosine--tRNA ligase (318 aa).

Tyr-35 is a binding site for L-tyrosine. Positions 40–48 (PSGKVHLGH) match the 'HIGH' region motif. 4 residues coordinate L-tyrosine: Tyr-154, Gln-158, Asp-161, and Gln-176. The short motif at 211 to 215 (KMSSS) is the 'KMSKS' region element. Ser-214 contributes to the ATP binding site.

Belongs to the class-I aminoacyl-tRNA synthetase family. TyrS type 3 subfamily. As to quaternary structure, homodimer.

Its subcellular location is the cytoplasm. The catalysed reaction is tRNA(Tyr) + L-tyrosine + ATP = L-tyrosyl-tRNA(Tyr) + AMP + diphosphate + H(+). Its function is as follows. Catalyzes the attachment of tyrosine to tRNA(Tyr) in a two-step reaction: tyrosine is first activated by ATP to form Tyr-AMP and then transferred to the acceptor end of tRNA(Tyr). The sequence is that of Tyrosine--tRNA ligase from Methanosphaera stadtmanae (strain ATCC 43021 / DSM 3091 / JCM 11832 / MCB-3).